A 283-amino-acid polypeptide reads, in one-letter code: NFU1 iron-sulfur cluster scaffold homolog, mitochondrial (283 aa).

The transit peptide at methionine 1 to isoleucine 30 directs the protein to the mitochondrion. A nifU region spans residues isoleucine 182–valine 250. Residues cysteine 219 and cysteine 222 each coordinate [4Fe-4S] cluster.

Belongs to the NifU family.

The protein resides in the mitochondrion. In terms of biological role, molecular scaffold for [Fe-S] cluster assembly of mitochondrial iron-sulfur proteins. The sequence is that of NFU1 iron-sulfur cluster scaffold homolog, mitochondrial from Drosophila yakuba (Fruit fly).